The sequence spans 84 residues: Small ribosomal subunit protein uS17 (84 aa).

This sequence belongs to the universal ribosomal protein uS17 family. Part of the 30S ribosomal subunit.

One of the primary rRNA binding proteins, it binds specifically to the 5'-end of 16S ribosomal RNA. In Borrelia garinii subsp. bavariensis (strain ATCC BAA-2496 / DSM 23469 / PBi) (Borreliella bavariensis), this protein is Small ribosomal subunit protein uS17.